We begin with the raw amino-acid sequence, 160 residues long: SsrA-binding protein (160 aa).

Belongs to the SmpB family.

It is found in the cytoplasm. Its function is as follows. Required for rescue of stalled ribosomes mediated by trans-translation. Binds to transfer-messenger RNA (tmRNA), required for stable association of tmRNA with ribosomes. tmRNA and SmpB together mimic tRNA shape, replacing the anticodon stem-loop with SmpB. tmRNA is encoded by the ssrA gene; the 2 termini fold to resemble tRNA(Ala) and it encodes a 'tag peptide', a short internal open reading frame. During trans-translation Ala-aminoacylated tmRNA acts like a tRNA, entering the A-site of stalled ribosomes, displacing the stalled mRNA. The ribosome then switches to translate the ORF on the tmRNA; the nascent peptide is terminated with the 'tag peptide' encoded by the tmRNA and targeted for degradation. The ribosome is freed to recommence translation, which seems to be the essential function of trans-translation. This is SsrA-binding protein from Yersinia enterocolitica serotype O:8 / biotype 1B (strain NCTC 13174 / 8081).